The primary structure comprises 177 residues: Large ribosomal subunit protein uL6 (177 aa).

The protein belongs to the universal ribosomal protein uL6 family. In terms of assembly, part of the 50S ribosomal subunit.

This protein binds to the 23S rRNA, and is important in its secondary structure. It is located near the subunit interface in the base of the L7/L12 stalk, and near the tRNA binding site of the peptidyltransferase center. This is Large ribosomal subunit protein uL6 from Pseudomonas syringae pv. tomato (strain ATCC BAA-871 / DC3000).